Here is a 1339-residue protein sequence, read N- to C-terminus: Receptor tyrosine-protein kinase erbB-3 (1339 aa).

An N-terminal signal peptide occupies residues 1–19 (MRATGTLQVLCFLLSLARG). The Extracellular segment spans residues 20-643 (SEMGNSQAVC…EVLMSKPHLV (624 aa)). Residue asparagine 126 is glycosylated (N-linked (GlcNAc...) asparagine). 11 cysteine pairs are disulfide-bonded: cysteine 186-cysteine 194, cysteine 190-cysteine 202, cysteine 210-cysteine 218, cysteine 214-cysteine 226, cysteine 227-cysteine 235, cysteine 231-cysteine 243, cysteine 246-cysteine 255, cysteine 259-cysteine 286, cysteine 290-cysteine 301, cysteine 305-cysteine 320, and cysteine 323-cysteine 327. N-linked (GlcNAc...) asparagine glycosylation is present at asparagine 250. 5 N-linked (GlcNAc...) asparagine glycosylation sites follow: asparagine 353, asparagine 408, asparagine 414, asparagine 437, and asparagine 469. Disulfide bonds link cysteine 500–cysteine 509, cysteine 504–cysteine 517, cysteine 520–cysteine 529, cysteine 533–cysteine 549, cysteine 552–cysteine 565, cysteine 556–cysteine 573, cysteine 576–cysteine 585, cysteine 589–cysteine 610, cysteine 613–cysteine 621, and cysteine 617–cysteine 629. The N-linked (GlcNAc...) asparagine glycan is linked to asparagine 522. The N-linked (GlcNAc...) asparagine glycan is linked to asparagine 566. The N-linked (GlcNAc...) asparagine glycan is linked to asparagine 616. A helical membrane pass occupies residues 644–662 (IAVTVGLAVILMILGGSFL). At 663 to 1339 (YWRGRRIQNK…LFPKANAQRT (677 aa)) the chain is on the cytoplasmic side. Position 684 is a phosphoserine (serine 684). A Protein kinase domain is found at 707 to 964 (LRKLKVLGSG…TFKELANEFT (258 aa)). ATP contacts are provided by residues 713–721 (LGSGVFGTV), lysine 740, 786–788 (QYL), and 832–837 (DLALRN). Catalysis depends on aspartate 832, which acts as the Proton acceptor. Serine 980 bears the Phosphoserine mark. Residues 1023-1036 (SLGSALSLPTGTLT) show a composition bias toward low complexity. 2 disordered regions span residues 1023-1052 (SLGS…SGYM) and 1078-1215 (PISL…GSLE). A compositionally biased stretch (polar residues) spans 1039–1052 (RGSQSLLSPSSGYM). Positions 1172 to 1184 (GTLSSVGLSSVLG) are enriched in low complexity. Positions 1185 to 1195 (TEEEDEDEEYE) are enriched in acidic residues.

The protein belongs to the protein kinase superfamily. Tyr protein kinase family. EGF receptor subfamily. Monomer and homodimer. Heterodimer with each of the other ERBB receptors (Potential). Interacts with CSPG5, PA2G4, GRB7, MYOC and MUC1. Found in a ternary complex with NRG1 and ITGAV:ITGB3 or ITGA6:ITGB4. Autophosphorylated. Ligand-binding increases phosphorylation on tyrosine residues and promotes its association with the p85 subunit of phosphatidylinositol 3-kinase.

It is found in the membrane. The enzyme catalyses L-tyrosyl-[protein] + ATP = O-phospho-L-tyrosyl-[protein] + ADP + H(+). In terms of biological role, tyrosine-protein kinase that plays an essential role as cell surface receptor for neuregulins. Binds to neuregulin-1 (NRG1) and is activated by it; ligand-binding increases phosphorylation on tyrosine residues and promotes its association with the p85 subunit of phosphatidylinositol 3-kinase. May also be activated by CSPG5. Involved in the regulation of myeloid cell differentiation. The sequence is that of Receptor tyrosine-protein kinase erbB-3 (Erbb3) from Rattus norvegicus (Rat).